Reading from the N-terminus, the 235-residue chain is RNA pyrophosphohydrolase (235 aa).

In terms of domain architecture, Nudix hydrolase spans 6–149 (GFRPNVGIIL…KREVYQLALS (144 aa)). The Nudix box motif lies at 38 to 59 (GGIKYGETPEQAMFRELHEEVG). The segment at 161–235 (APLSPYGRGG…PDDTAPKDNS (75 aa)) is disordered. Positions 171–196 (QHRERDGRDARDSRERSSDQGGRNEQ) are enriched in basic and acidic residues. Residues 203–220 (TVTTTTVIVETVSVSAPT) show a composition bias toward low complexity.

Belongs to the Nudix hydrolase family. RppH subfamily. A divalent metal cation is required as a cofactor.

Its function is as follows. Accelerates the degradation of transcripts by removing pyrophosphate from the 5'-end of triphosphorylated RNA, leading to a more labile monophosphorylated state that can stimulate subsequent ribonuclease cleavage. The polypeptide is RNA pyrophosphohydrolase (Ralstonia pickettii (strain 12J)).